Here is a 502-residue protein sequence, read N- to C-terminus: Protein adenylyltransferase Fic (502 aa).

The tract at residues 1-24 (MAMATGKATEEEQPEQGQQQQQLQ) is disordered. The span at 15 to 24 (EQGQQQQQLQ) shows a compositional bias: low complexity. Residues 38-60 (FALFFIAGCLAAFGFHALTSSSG) form a helical membrane-spanning segment. 2 TPR repeats span residues 122-155 (AMGA…APKH) and 156-190 (PEVL…NPSN). Positions 247-252 (SVGIEG) match the Inhibitory (S/T)XXXE(G/N) motif motif. ATP is bound by residues glutamate 251 and 332–335 (VGGH). A Fido domain is found at 301 to 436 (ITLKDILELH…IRPFVRFIAD (136 aa)). The active site involves histidine 379. Residues 383-390 (DGNGRTSR), 415-416 (YY), and asparagine 423 contribute to the ATP site. Residues 478-502 (SPELYESGSGSGAGAGAGSGQKGMP) are disordered. A compositionally biased stretch (gly residues) spans 486–502 (SGSGAGAGAGSGQKGMP).

This sequence belongs to the fic family. Homodimer.

It localises to the membrane. The enzyme catalyses L-tyrosyl-[protein] + ATP = O-(5'-adenylyl)-L-tyrosyl-[protein] + diphosphate. The catalysed reaction is L-threonyl-[protein] + ATP = 3-O-(5'-adenylyl)-L-threonyl-[protein] + diphosphate. It carries out the reaction 3-O-(5'-adenylyl)-L-threonyl-[protein] + H2O = L-threonyl-[protein] + AMP + H(+). The side chain of Glu-251 determines which of the two opposing activities (AMPylase or de-AMPylase) will take place. In response to endoplasmic reticulum stress, mediates de-AMPylase activity. Adenylyltransferase activity is inhibited by the inhibitory helix present at the N-terminus: Glu-251 binds ATP and competes with ATP-binding at Arg-390, thereby preventing adenylyltransferase activity. In unstressed cells, disengagement of Glu-251 promotes adenylyltransferase activity. Activation dissociates ATP-binding from Glu-251, allowing ordered binding of the entire ATP moiety with the alpha-phosphate in an orientation that is productive for accepting an incoming target hydroxyl side chain. Functionally, protein that can both mediate the addition of adenosine 5'-monophosphate (AMP) to specific residues of target proteins (AMPylation), and the removal of the same modification from target proteins (de-AMPylation), depending on the context. The side chain of Glu-251 determines which of the two opposing activities (AMPylase or de-AMPylase) will take place. Acts as a key regulator of the unfolded protein response (UPR) by mediating AMPylation or de-AMPylation of Hsc70-3/BiP. In unstressed cells, acts as an adenylyltransferase by mediating AMPylation of Hsc70-3/BiP at 'Thr-518', thereby inactivating it. In response to endoplasmic reticulum stress, acts as a phosphodiesterase by mediating removal of ATP (de-AMPylation) from Hsc70-3/BiP at 'Thr-518', leading to restore HSPA5/BiP activity. The polypeptide is Protein adenylyltransferase Fic (Drosophila mojavensis (Fruit fly)).